A 211-amino-acid polypeptide reads, in one-letter code: Ethylene-responsive transcription factor LEP (211 aa).

Disordered stretches follow at residues 1–21 and 74–110; these read MNTT…TRFL and NFVY…NDPV. A DNA-binding region (AP2/ERF) is located at residues 19-76; the sequence is RFLGVRRRPWGRYAAEIRDPTTKERHWLGTFDTAEEAALAYDRAARSMRGTRARTNFV. Residues 81–92 show a composition bias toward low complexity; that stretch reads PPSSSVTSIVSP. Pro residues predominate over residues 93 to 107; it reads DDPPPPPPPPAPPSN.

This sequence belongs to the AP2/ERF transcription factor family. ERF subfamily. In terms of tissue distribution, expressed in germinating seeds. Present in young shoots, at low levels, especially in leaf primordia and developing leaf blades. Also detected in vascular tissue, mostly in xylem, of young leaves, petioles and hypocotyls.

It is found in the nucleus. In terms of biological role, cell division-promoting factor involved in leaf blade differentiation, inflorescence branching, as well as in carpel and silique shape. Promotes the number of xylem cells. Positively regulates the gibberellin signaling pathway leading to germination, hypocotyl elongation, and leaf expansion. Probably acts as a transcriptional activator. Binds to the GCC-box pathogenesis-related promoter element. May be involved in the regulation of gene expression by stress factors and by components of stress signal transduction pathways. This Arabidopsis thaliana (Mouse-ear cress) protein is Ethylene-responsive transcription factor LEP (LEP).